The sequence spans 367 residues: Queuine tRNA-ribosyltransferase (367 aa).

Catalysis depends on D89, which acts as the Proton acceptor. Substrate contacts are provided by residues 89 to 93, D143, Q187, and G214; that span reads DSGGF. Positions 245 to 251 are RNA binding; sequence GVGTPAD. D264 serves as the catalytic Nucleophile. Residues 269-273 are RNA binding; important for wobble base 34 recognition; it reads TRNAR. Zn(2+)-binding residues include C302, C304, C307, and H333.

Belongs to the queuine tRNA-ribosyltransferase family. Homodimer. Within each dimer, one monomer is responsible for RNA recognition and catalysis, while the other monomer binds to the replacement base PreQ1. Zn(2+) serves as cofactor.

The enzyme catalyses 7-aminomethyl-7-carbaguanine + guanosine(34) in tRNA = 7-aminomethyl-7-carbaguanosine(34) in tRNA + guanine. The protein operates within tRNA modification; tRNA-queuosine biosynthesis. In terms of biological role, catalyzes the base-exchange of a guanine (G) residue with the queuine precursor 7-aminomethyl-7-deazaguanine (PreQ1) at position 34 (anticodon wobble position) in tRNAs with GU(N) anticodons (tRNA-Asp, -Asn, -His and -Tyr). Catalysis occurs through a double-displacement mechanism. The nucleophile active site attacks the C1' of nucleotide 34 to detach the guanine base from the RNA, forming a covalent enzyme-RNA intermediate. The proton acceptor active site deprotonates the incoming PreQ1, allowing a nucleophilic attack on the C1' of the ribose to form the product. After dissociation, two additional enzymatic reactions on the tRNA convert PreQ1 to queuine (Q), resulting in the hypermodified nucleoside queuosine (7-(((4,5-cis-dihydroxy-2-cyclopenten-1-yl)amino)methyl)-7-deazaguanosine). The protein is Queuine tRNA-ribosyltransferase of Nitrosospira multiformis (strain ATCC 25196 / NCIMB 11849 / C 71).